The following is a 572-amino-acid chain: uncharacterized protein (572 aa).

The tract at residues 553-572 (PSPAPKPVTVRKKKGNSPIS) is disordered. Positions 561–572 (TVRKKKGNSPIS) are enriched in basic residues.

This is an uncharacterized protein from Homo sapiens (Human).